The chain runs to 413 residues: Divalent metal cation transporter MntH (413 aa).

Residues 1–19 are Cytoplasmic-facing; it reads MTDNRVENSSGRAARKLRL. The chain crosses the membrane as a helical span at residues 20-39; the sequence is ALMGPAFIAAIGYIDPGNFA. At 40–51 the chain is on the periplasmic side; that stretch reads TNIQAGASFGYQ. A helical transmembrane segment spans residues 52–71; sequence LLWVVVWANLMAMLIQILSA. Residues 72–95 lie on the Cytoplasmic side of the membrane; it reads KLGIATGKNLAEQIRDHYPRPVVW. A helical membrane pass occupies residues 96–118; that stretch reads FYWVQAEIIAMATDLAEFIGAAI. Residues 119–125 lie on the Periplasmic side of the membrane; the sequence is GFKLILG. The helical transmembrane segment at 126–145 threads the bilayer; it reads VSLLQGAVLTGIATFLILML. The Cytoplasmic segment spans residues 146 to 155; the sequence is QRRGQKPLEK. The chain crosses the membrane as a helical span at residues 156–175; that stretch reads VIGGLLLFVAAAYIVELFFS. Over 176–196 the chain is Periplasmic; sequence QPDMAQLGKGMVIPALPNPEA. A helical membrane pass occupies residues 197-220; the sequence is VFLAAGVLGATIMPHVIYLHSSLT. Residues 221 to 238 lie on the Cytoplasmic side of the membrane; it reads QHLHGGTRQQRYSATKWD. Residues 239–258 traverse the membrane as a helical segment; the sequence is VAIAMTIAGFVNLAMMATAA. Residues 259 to 276 lie on the Periplasmic side of the membrane; it reads AAFHFSGHTGIADLDQAY. A helical membrane pass occupies residues 277–297; the sequence is LTLEPLLSHAAATVFGLSLVA. The Cytoplasmic segment spans residues 298-327; that stretch reads AGLSSTVVGTLAGQVVMQGFVRFHIPLWVR. A helical membrane pass occupies residues 328–344; it reads RTITMLPSFIVILMGLD. The Periplasmic segment spans residues 345 to 350; sequence PTRILV. A helical transmembrane segment spans residues 351–370; that stretch reads MSQVLLSFGIALALVPLLIF. Over 371-387 the chain is Cytoplasmic; it reads TSNATLMGELVNTRRVK. The helical transmembrane segment at 388 to 406 threads the bilayer; that stretch reads QVGWIIVVLVVALNIWLLV. At 407–413 the chain is on the periplasmic side; it reads GTVMGLS.

It belongs to the NRAMP family.

The protein localises to the cell inner membrane. Functionally, h(+)-stimulated, divalent metal cation uptake system. This chain is Divalent metal cation transporter MntH, found in Salmonella paratyphi C (strain RKS4594).